Reading from the N-terminus, the 242-residue chain is HTH domain-truncated transcriptional regulator QseD (242 aa).

Belongs to the LysR transcriptional regulatory family.

Represses EHEC virulence expression. Down-regulates expression of LEE (locus of enterocyte effacement) and iraD genes, and alters AE (attaching and effacing) lesion formation. May regulate transcription through interactions with another HTH DNA-binding protein. This is HTH domain-truncated transcriptional regulator QseD (qseD) from Escherichia coli O157:H7.